We begin with the raw amino-acid sequence, 318 residues long: Nisin-resistance protein (318 aa).

Residues 7-28 (ILLGLVAVCALFLGIIYLWGYK) traverse the membrane as a helical segment.

The protein resides in the cell membrane. The chain is Nisin-resistance protein (nsr) from Lactococcus lactis subsp. lactis (Streptococcus lactis).